The sequence spans 179 residues: ATP-dependent protease subunit HslV (179 aa).

Residue Thr-9 is part of the active site. Ala-164, Cys-167, and Thr-170 together coordinate Na(+).

It belongs to the peptidase T1B family. HslV subfamily. As to quaternary structure, a double ring-shaped homohexamer of HslV is capped on each side by a ring-shaped HslU homohexamer. The assembly of the HslU/HslV complex is dependent on binding of ATP.

Its subcellular location is the cytoplasm. It carries out the reaction ATP-dependent cleavage of peptide bonds with broad specificity.. With respect to regulation, allosterically activated by HslU binding. In terms of biological role, protease subunit of a proteasome-like degradation complex believed to be a general protein degrading machinery. This chain is ATP-dependent protease subunit HslV, found in Syntrophobacter fumaroxidans (strain DSM 10017 / MPOB).